A 552-amino-acid polypeptide reads, in one-letter code: MSGQTETLSSTSNIPIAKAEPEQSADFSASHKKRGPVSDRSSRRTSSEEVDLMPNVDDEVDGDVKPKKIGRKNSDQEPSSKRKAQNRAAQRAFRKRKEDHLKALETQVVTLKELHSSTTLENDQLRQKVRQLEEELRILKDGSFTFEMSLPHRNPSLSSLPTTGFSSNFAHMKDGISPQSNLHLSPNSIEKPNMHQNVLHNDRSADNLNHRYQVPPTLVDSNSAQGTLSPETPSSSDSPSNLYLNYPKRKSITHLHHDCSALSNGENGEDVADGKQFCQKLSTACGSIACSMLTKTTPHRASVDILSNLHESTVSPPMADESVQRSSEVSKSIPNVELSLNVNQQFVSPFGGTDSFPLPTDTGLDSLFEPDSAIENSHLKNVVMEPELFQAWREPAESLDKEFFNDEGEIDDVFHNYFHNSNENGDLITNSLHGLDFLENANESFPEQMYPFIKHNKDYISNHPDEVPPDGLPQKGKHDTSSQMPSENEIVPAKERAYLSCPKVWSKIINHPRFESFDIDDLCSKLKNKAKCSSSGVLLDERDVEAALNQFN.

Positions 1–14 are enriched in polar residues; sequence MSGQTETLSSTSNI. A disordered region spans residues 1-99; it reads MSGQTETLSS…QRAFRKRKED (99 aa). Over residues 36–47 the composition is skewed to basic and acidic residues; it reads PVSDRSSRRTSS. Acidic residues predominate over residues 48–61; the sequence is EEVDLMPNVDDEVD. The span at 62–80 shows a compositional bias: basic and acidic residues; it reads GDVKPKKIGRKNSDQEPSS. Positions 76–139 constitute a bZIP domain; it reads QEPSSKRKAQ…RQLEEELRIL (64 aa). Residues 81–88 carry the Nuclear localization signal motif; the sequence is KRKAQNRA. The tract at residues 81-102 is basic motif; that stretch reads KRKAQNRAAQRAFRKRKEDHLK. The interval 104–111 is leucine-zipper; it reads LETQVVTL. Residues 213-244 are disordered; that stretch reads QVPPTLVDSNSAQGTLSPETPSSSDSPSNLYL. The segment covering 219 to 228 has biased composition (polar residues); it reads VDSNSAQGTL. The segment covering 229–240 has biased composition (low complexity); sequence SPETPSSSDSPS. Residues 259-290 are n-CRD; that stretch reads CSALSNGENGEDVADGKQFCQKLSTACGSIAC. 2 disulfides stabilise this stretch: Cys-278/Cys-501 and Cys-285/Cys-532. The segment at 460–489 is disordered; the sequence is ISNHPDEVPPDGLPQKGKHDTSSQMPSENE. Residues 501-532 are c-CRD; sequence CPKVWSKIINHPRFESFDIDDLCSKLKNKAKC. The Nuclear export signal signature appears at 515 to 533; the sequence is ESFDIDDLCSKLKNKAKCS.

Belongs to the bZIP family. YAP subfamily. In terms of assembly, homodimer. The reduced form of pap1 interacts in the nucleus with the nuclear export protein crm1, and in the cytoplasm with the peroxiredoxin tpx1. Depending on the oxidative stress inducing agent, pap1 can undergo two distinct conformational changes, both masking the nuclear export signal, thus abolishing nuclear export by crm1/exportin 1. The glutathione-depleting agent diethylmaleate (DEM) leads to the non-reversible modification of at least 2 cysteine residues in the c-CRD. Peroxide stress induces the formation of a tpx1-dependent interdomain disulfide bond between Cys-278 and Cys-501.

Its subcellular location is the nucleus. The protein localises to the cytoplasm. Its function is as follows. Transcription activator involved in multidrug resistance, oxidative stress response, and redox homeostasis. Regulates the transcription of genes encoding antioxidant enzymes like catalase ctt1 and components of the cellular thiol-reducing pathways, including the thioredoxin system (trx2, trr1), ABC transporters involved in multidrug resistance like bfr1/hba2 and pmd1 as well as the gene obr1/apt1. Preferentially binds to promoters with the core binding site 5'-TTA[CG]TAA-3'. Activity of the transcription factor is controlled through oxidation of specific cysteine residues resulting in the alteration of its subcellular location. Oxidative stress induces nuclear accumulation and as a result pap1 transcriptional activity. Required for sty1/spc1-conferred staurosporine resistance. This Schizosaccharomyces pombe (strain 972 / ATCC 24843) (Fission yeast) protein is AP-1-like transcription factor (pap1).